The sequence spans 261 residues: Shikimate dehydrogenase (NADP(+)) (261 aa).

Shikimate contacts are provided by residues 13–15 (SLS) and threonine 60. Catalysis depends on lysine 64, which acts as the Proton acceptor. Residues asparagine 85 and aspartate 100 each coordinate shikimate. NADP(+) is bound by residues 121–125 (GAGGA) and isoleucine 202. Tyrosine 204 is a shikimate binding site. Glycine 225 contributes to the NADP(+) binding site.

It belongs to the shikimate dehydrogenase family. As to quaternary structure, homodimer.

It catalyses the reaction shikimate + NADP(+) = 3-dehydroshikimate + NADPH + H(+). It functions in the pathway metabolic intermediate biosynthesis; chorismate biosynthesis; chorismate from D-erythrose 4-phosphate and phosphoenolpyruvate: step 4/7. Its function is as follows. Involved in the biosynthesis of the chorismate, which leads to the biosynthesis of aromatic amino acids. Catalyzes the reversible NADPH linked reduction of 3-dehydroshikimate (DHSA) to yield shikimate (SA). The polypeptide is Shikimate dehydrogenase (NADP(+)) (Exiguobacterium sibiricum (strain DSM 17290 / CCUG 55495 / CIP 109462 / JCM 13490 / 255-15)).